Here is a 151-residue protein sequence, read N- to C-terminus: Deoxyuridine 5'-triphosphate nucleotidohydrolase (151 aa).

Residues 70 to 72 (RSG), Asn83, 87 to 89 (LID), and Met97 contribute to the substrate site.

Belongs to the dUTPase family. Mg(2+) is required as a cofactor.

It catalyses the reaction dUTP + H2O = dUMP + diphosphate + H(+). It functions in the pathway pyrimidine metabolism; dUMP biosynthesis; dUMP from dCTP (dUTP route): step 2/2. Its function is as follows. This enzyme is involved in nucleotide metabolism: it produces dUMP, the immediate precursor of thymidine nucleotides and it decreases the intracellular concentration of dUTP so that uracil cannot be incorporated into DNA. The chain is Deoxyuridine 5'-triphosphate nucleotidohydrolase from Sodalis glossinidius (strain morsitans).